Consider the following 208-residue polypeptide: Small ribosomal subunit protein uS4 (208 aa).

The S4 RNA-binding domain occupies 98-158 (SRLDNAVYRL…EKSRNMQVID (61 aa)).

This sequence belongs to the universal ribosomal protein uS4 family. As to quaternary structure, part of the 30S ribosomal subunit. Contacts protein S5. The interaction surface between S4 and S5 is involved in control of translational fidelity.

In terms of biological role, one of the primary rRNA binding proteins, it binds directly to 16S rRNA where it nucleates assembly of the body of the 30S subunit. Its function is as follows. With S5 and S12 plays an important role in translational accuracy. The sequence is that of Small ribosomal subunit protein uS4 from Desulfosudis oleivorans (strain DSM 6200 / JCM 39069 / Hxd3) (Desulfococcus oleovorans).